Reading from the N-terminus, the 843-residue chain is Protein piwi (843 aa).

Residues 1 to 12 (MADDQGRGRRRP) carry the Nuclear localization signal motif. The segment at 1–76 (MADDQGRGRR…TERKPWGDQY (76 aa)) is disordered. Residues 1-257 (MADDQGRGRR…ILLGTEITHK (257 aa)) form an interaction with CBX5 and papi region. Arginine 7, arginine 9, arginine 10, and arginine 11 each carry symmetric dimethylarginine. Residues 41–72 (PRADPRIEASRERRALEEAPRREGGPTERKPW) show a composition bias toward basic and acidic residues. The region spanning 263–372 (TIYDIMRRCS…LIPELCRVTG (110 aa)) is the PAZ domain. Positions 538 to 829 (LILCLVPNDN…LATLVGTNLH (292 aa)) constitute a Piwi domain. Glutamine 589 lines the Mg(2+) pocket. Catalysis depends on residues aspartate 614 and aspartate 685. Residue leucine 843 participates in Mg(2+) binding.

The protein belongs to the argonaute family. Piwi subfamily. In terms of assembly, in the ovaries, part of a complex composed of at least Panx, nxf2, piwi and Nxt1. The complex is knowns as Panx-induced co-transcriptional silencing (PICTS) complex, Panx-nxf2-dependent TAP/p15 silencing (Pandas complex), SFiNX (silencing factor interacting nuclear export variant) or piwi-Panx-nxf2-p15 (PPNP) complex. Interacts with vas; this interaction is RNA-independent. Interacts with Dcr-1 and Fmr1; these interactions occur in polar granules. Interacts (via N-terminal region) with CBX5 (via chromoshadow domain). Forms a complex with Hsp83 and Hop; probably Hop mediates the interaction between piwi and Hsp83. Forms a complex with Yb body components armi and fs(1)Yb; this interaction is required for proper piRNA loading and nuclear localization of piwi. Interaction of Piwi and fs(1)Yb is likely to occur via armi. Interacts (via the N-terminal region when unmethylated or symmetrically methylated at Arg-10) with papi (via Tudor domain). Interacts with vret. Interacts with Panx. Interacts with arx. Interacts with Tudor-SN. Interacts with Nup358 (via N-terminus). Associates with the nuclear pore complex via interaction with Elys. Interacts with thoc5; the interaction might be partly RNA-mediated. Interacts with xmas-2. Symmetrically dimethylated, most likely by csul. Methylation at Arg-10 enhances binding to papi whereas methylation at Arg-7, Arg-9 or Arg-11 reduces binding affinity to papi. In terms of processing, phosphorylated on serine and tyrosine residues in an Hsp83-dependent manner. In terms of tissue distribution, expressed in ovaries (at protein level). Expressed somatically in ovariole terminal filament cells, epithelial sheath cells, cap cells and follicle cells (at protein level). Expressed in nurse cells and oocytes in developing egg chambers (at protein level). In embryos, accumulates in pole cells (at protein level). In larval and adult testis, expressed in a germinal proliferative center at the apical tip containing somatic hub cells and mitotically dividing germ stem cells (at protein level).

It localises to the cytoplasm. It is found in the nucleus. Its subcellular location is the nucleoplasm. The protein localises to the chromosome. In terms of biological role, acts via the piwi-interacting RNA (piRNA) metabolic process, which mediates the repression of transposable elements during meiosis by forming complexes composed of piRNAs and Piwi proteins and governs the methylation and subsequent repression of transposons. Directly binds piRNAs, a class of 24 to 30 nucleotide RNAs that are generated by a Dicer-independent mechanism and are primarily derived from transposons and other repeated sequence elements. In ovarian somatic cells, mediates silencing of transposable elements at the transcriptional level in a mael-dependent manner. Involved in silencing of long terminal repeat (LTR) retrotransposons in male germline. In testis, regulates spermatogenesis together with Tudor-SN. In germ cells, mediates silencing at both transcriptional and post-transcriptional levels and is involved in the maintenance of populations of primary and secondary piRNAs. Piwi-mediated transcriptional silencing is accompanied by the formation of His3 trimethylated on 'Lys-10' (H3K9me3) associated euchromatin and heterochromatin. In ovary, associates predominantly with antisense piRNAs that contain uridine at their 5' end. Association with sense piRNAs is also observed but to a lesser extent. Mediates a somatic signaling mechanism required for the maintenance of germline stem cells to produce and maintain a daughter germline stem cell. It is not essential for the further differentiation of the committed daughter cell. Acts cell autonomously to promote germline stem cell division. Its role in stem cell maintenance does not seem to require nuclear localization. Required maternally for the posterior localization of osk and vas and for pole cell formation during oogenesis and early embryogenesis. Together with Hop and Hsp83, mediates canalization, also known as developmental robustness, likely via epigenetic silencing of existing genetic variants and suppression of transposon-induced new genetic variation. Shows RNA cleavage activity, although is not required for any of its known functions. In the ovaries, forms a complex with nxf2, Panx and Nxt1 which acts as effectors of cotranscriptional transposon silencing. This is Protein piwi from Drosophila melanogaster (Fruit fly).